The chain runs to 316 residues: Ribosomal RNA small subunit methyltransferase H (316 aa).

S-adenosyl-L-methionine is bound by residues 35–37, Asp-55, Phe-84, Asp-105, and Gln-112; that span reads SGH.

This sequence belongs to the methyltransferase superfamily. RsmH family.

Its subcellular location is the cytoplasm. The enzyme catalyses cytidine(1402) in 16S rRNA + S-adenosyl-L-methionine = N(4)-methylcytidine(1402) in 16S rRNA + S-adenosyl-L-homocysteine + H(+). Its function is as follows. Specifically methylates the N4 position of cytidine in position 1402 (C1402) of 16S rRNA. The sequence is that of Ribosomal RNA small subunit methyltransferase H from Streptococcus pyogenes serotype M18 (strain MGAS8232).